A 164-amino-acid polypeptide reads, in one-letter code: Crossover junction endodeoxyribonuclease RuvC (164 aa).

Catalysis depends on residues aspartate 7, glutamate 67, and aspartate 140. Residues aspartate 7, glutamate 67, and aspartate 140 each contribute to the Mg(2+) site.

The protein belongs to the RuvC family. Homodimer which binds Holliday junction (HJ) DNA. The HJ becomes 2-fold symmetrical on binding to RuvC with unstacked arms; it has a different conformation from HJ DNA in complex with RuvA. In the full resolvosome a probable DNA-RuvA(4)-RuvB(12)-RuvC(2) complex forms which resolves the HJ. Requires Mg(2+) as cofactor.

Its subcellular location is the cytoplasm. It carries out the reaction Endonucleolytic cleavage at a junction such as a reciprocal single-stranded crossover between two homologous DNA duplexes (Holliday junction).. In terms of biological role, the RuvA-RuvB-RuvC complex processes Holliday junction (HJ) DNA during genetic recombination and DNA repair. Endonuclease that resolves HJ intermediates. Cleaves cruciform DNA by making single-stranded nicks across the HJ at symmetrical positions within the homologous arms, yielding a 5'-phosphate and a 3'-hydroxyl group; requires a central core of homology in the junction. The consensus cleavage sequence is 5'-(A/T)TT(C/G)-3'. Cleavage occurs on the 3'-side of the TT dinucleotide at the point of strand exchange. HJ branch migration catalyzed by RuvA-RuvB allows RuvC to scan DNA until it finds its consensus sequence, where it cleaves and resolves the cruciform DNA. This Pelotomaculum thermopropionicum (strain DSM 13744 / JCM 10971 / SI) protein is Crossover junction endodeoxyribonuclease RuvC.